Here is a 396-residue protein sequence, read N- to C-terminus: Serine/threonine-protein kinase VRK1 (396 aa).

One can recognise a Protein kinase domain in the interval 37-317 (WKVGLPIGQG…LLDYTEKPLY (281 aa)). ATP is bound by residues 43 to 51 (IGQGGFGCI) and Lys71. Lys71 participates in a covalent cross-link: Glycyl lysine isopeptide (Lys-Gly) (interchain with G-Cter in SUMO2). Asp177 acts as the Proton acceptor in catalysis. Ser342 is subject to Phosphoserine; by PLK3. The segment at 354 to 396 (ITKKRKKEIEESKEPGVEDTEWSNTQTEEAIQTRSRTRKRVQK) is disordered. Thr355 carries the post-translational modification Phosphothreonine; by autocatalysis. The span at 360–369 (KEIEESKEPG) shows a compositional bias: basic and acidic residues. A compositionally biased stretch (polar residues) spans 375-387 (WSNTQTEEAIQTR). Position 376 is a phosphoserine (Ser376). Thr378 is modified (phosphothreonine). A required for interaction with the nucleosome region spans residues 387–393 (RSRTRKR).

It belongs to the protein kinase superfamily. CK1 Ser/Thr protein kinase family. VRK subfamily. In terms of assembly, interacts with HDAC1, KAT2B, SETDB1, KDM3A and KDM4A. Associates with the nucleosome through interactions with nucleosome DNA, histone H2A and histone H2B; the interaction with H2A and H2B is mediated by the nucleosome acidic patch, a cluster of negatively charged residues of H2A and H2B forming a cleft within the nucleosome core. As to quaternary structure, (Microbial infection) Interacts with vaccinia protein B12; this interaction inhibits the repressive activity of the vaccinia virus B12 pseudokinase on viral replication factory formation. Post-translationally, autophosphorylated at various serine and threonine residues. Autophosphorylation does not impair its ability to phosphorylate p53/TP53. Phosphorylation by PLK3 leads to induction of Golgi fragmentation during mitosis. As to expression, widely expressed. Highly expressed in fetal liver, testis and thymus.

It is found in the nucleus. It localises to the cytoplasm. The protein localises to the cajal body. The enzyme catalyses L-seryl-[protein] + ATP = O-phospho-L-seryl-[protein] + ADP + H(+). The catalysed reaction is L-threonyl-[protein] + ATP = O-phospho-L-threonyl-[protein] + ADP + H(+). Its activity is regulated as follows. Active in presence of Mn(2+), Mg(2+) and Zn(2+), but is not functional with Ca(2+) or Cu(2+). Has a higher affinity for Mn(2+) than for Mg(2+). RAN inhibits its autophosphorylation and its ability to phosphorylate histone H3. Its function is as follows. Serine/threonine kinase involved in the regulation of key cellular processes including the cell cycle, nuclear condensation, transcription regulation, and DNA damage response. Controls chromatin organization and remodeling by mediating phosphorylation of histone H3 on 'Thr-4' and histone H2AX (H2aXT4ph). It also phosphorylates KAT5 in response to DNA damage, promoting KAT5 association with chromatin and histone acetyltransferase activity. Is involved in the regulation of cell cycle progression of neural progenitors, and is required for proper cortical neuronal migration. Is involved in neurite elongation and branching in motor neurons, and has an essential role in Cajal bodies assembly, acting through COIL phosphorylation and the control of coilin degradation. Involved in Golgi disassembly during the cell cycle: following phosphorylation by PLK3 during mitosis, it is required to induce Golgi fragmentation. Phosphorylates BANF1: disrupts its ability to bind DNA, reduces its binding to LEM domain-containing proteins and causes its relocalization from the nucleus to the cytoplasm. Phosphorylates TP53BP1 and p53/TP53 on 'Thr-18', preventing the interaction between p53/TP53 and MDM2. Phosphorylates ATF2 which activates its transcriptional activity. Phosphorylates JUN. This chain is Serine/threonine-protein kinase VRK1, found in Homo sapiens (Human).